A 226-amino-acid chain; its full sequence is V-type proton ATPase subunit E 2 (226 aa).

Belongs to the V-ATPase E subunit family. In terms of assembly, V-ATPase is a heteromultimeric enzyme made up of two complexes: the ATP-hydrolytic V1 complex and the proton translocation V0 complex. The V1 complex consists of three catalytic AB heterodimers that form a heterohexamer, three peripheral stalks each consisting of EG heterodimers, one central rotor including subunits D and F, and the regulatory subunits C and H. The proton translocation complex V0 consists of the proton transport subunit a, a ring of proteolipid subunits c9c'', rotary subunit d, subunits e and f, and the accessory subunits ATP6AP1/Ac45 and ATP6AP2/PRR. As to expression, testis specific.

Functionally, subunit of the V1 complex of vacuolar(H+)-ATPase (V-ATPase), a multisubunit enzyme composed of a peripheral complex (V1) that hydrolyzes ATP and a membrane integral complex (V0) that translocates protons. V-ATPase is responsible for acidifying and maintaining the pH of intracellular compartments and in some cell types, is targeted to the plasma membrane, where it is responsible for acidifying the extracellular environment. This is V-type proton ATPase subunit E 2 (ATP6V1E2) from Homo sapiens (Human).